Consider the following 72-residue polypeptide: Protein kish-A (72 aa).

A signal peptide spans 1 to 26 (MSAIFNFQSLLTVILLLICTCAYIRS). The Extracellular segment spans residues 27–53 (LAPSLLDKNKSGLLGIFWKCARIGERK). The N-linked (GlcNAc...) asparagine glycan is linked to Asn35. Residues 54-71 (SPYVAVCCVVMAFSILFM) traverse the membrane as a helical segment. Gln72 is a topological domain (cytoplasmic).

It belongs to the KISH family.

The protein localises to the golgi apparatus membrane. In terms of biological role, involved in the early part of the secretory pathway. The sequence is that of Protein kish-A (TMEM167A) from Taeniopygia guttata (Zebra finch).